The following is a 183-amino-acid chain: Ribosome-recycling factor (183 aa).

It belongs to the RRF family.

The protein localises to the cytoplasm. Functionally, responsible for the release of ribosomes from messenger RNA at the termination of protein biosynthesis. May increase the efficiency of translation by recycling ribosomes from one round of translation to another. This chain is Ribosome-recycling factor, found in Bifidobacterium longum (strain DJO10A).